We begin with the raw amino-acid sequence, 541 residues long: Mesoderm induction early response protein 2 (541 aa).

Ser-11 carries the phosphoserine modification. Disordered regions lie at residues Asp-100 to Met-119 and Leu-131 to Ala-186. Over residues Gln-140 to Ser-165 the composition is skewed to polar residues. The ELM2 domain occupies Lys-194 to Val-291. Residues Asp-296–Arg-348 form the SANT domain. The disordered stretch occupies residues Val-364–Gln-440.

As to quaternary structure, part of a complex containing at least CDYL, MIER1, MIER2, HDAC1 and HDAC2.

Its subcellular location is the nucleus. Functionally, transcriptional repressor. In Mus musculus (Mouse), this protein is Mesoderm induction early response protein 2 (Mier2).